A 70-amino-acid chain; its full sequence is DNA gyrase inhibitor YacG (70 aa).

Cys9, Cys12, Cys28, and Cys32 together coordinate Zn(2+). A disordered region spans residues Glu43–Gln70.

This sequence belongs to the DNA gyrase inhibitor YacG family. Interacts with GyrB. The cofactor is Zn(2+).

Functionally, inhibits all the catalytic activities of DNA gyrase by preventing its interaction with DNA. Acts by binding directly to the C-terminal domain of GyrB, which probably disrupts DNA binding by the gyrase. The sequence is that of DNA gyrase inhibitor YacG from Legionella pneumophila (strain Paris).